The following is an 82-amino-acid chain: Precursor of CEP3 (82 aa).

The signal sequence occupies residues 1-24 (MATINVYVFAFIFLLTISVGSIEG). Residues 25–63 (RKLTKFTVTTSEEIRAGGSVLSSSPPTEPLESPPSHGVD) constitute a propeptide that is removed on maturation. The interval 40–82 (AGGSVLSSSPPTEPLESPPSHGVDTFRPTEPGHSPGIGHSVHN) is disordered. 3 positions are modified to hydroxyproline: Pro-67, Pro-70, and Pro-74. Positions 79-82 (SVHN) are excised as a propeptide.

The protein belongs to the C-terminally encoded plant signaling peptide (CEP) family. In terms of assembly, interacts with the CEP receptor CEPR1. The mature small signaling peptide is generated by proteolytic processing of the longer precursor. As to expression, mostly expressed in roots. Present in lateral roots (especially in vasculature), root-hypocotyl junction and cotyledons.

The protein localises to the secreted. It localises to the extracellular space. It is found in the apoplast. Extracellular signaling peptide that represses primary root growth rate and significantly inhibits lateral root formation. Promotes shoot growth. Modulates leaf morphology. Regulates systemic nitrogen (N)-demand signaling. Mediates systemic up-regulation of genes involved in N uptake and assimilation pathways. This is Precursor of CEP3 from Arabidopsis thaliana (Mouse-ear cress).